A 333-amino-acid chain; its full sequence is S-adenosylmethionine decarboxylase proenzyme (333 aa).

F7 lines the substrate pocket. Catalysis depends on residues E8 and E11. Residue E67 coordinates substrate. The active-site Schiff-base intermediate with substrate; via pyruvic acid is S68. Residue S68 is modified to Pyruvic acid (Ser); by autocatalysis. The active-site Proton donor; for catalytic activity is the C82. F223 is a binding site for substrate. Residues S229 and H243 each act as proton acceptor; for processing activity in the active site. E247 lines the substrate pocket. Phosphoserine is present on S298.

This sequence belongs to the eukaryotic AdoMetDC family. Heterotetramer of two alpha and two beta chains. It depends on pyruvate as a cofactor. Post-translationally, is synthesized initially as an inactive proenzyme. Formation of the active enzyme involves a self-maturation process in which the active site pyruvoyl group is generated from an internal serine residue via an autocatalytic post-translational modification. Two non-identical subunits are generated from the proenzyme in this reaction, and the pyruvate is formed at the N-terminus of the alpha chain, which is derived from the carboxyl end of the proenzyme. The post-translation cleavage follows an unusual pathway, termed non-hydrolytic serinolysis, in which the side chain hydroxyl group of the serine supplies its oxygen atom to form the C-terminus of the beta chain, while the remainder of the serine residue undergoes an oxidative deamination to produce ammonia and the pyruvoyl group blocking the N-terminus of the alpha chain.

It carries out the reaction S-adenosyl-L-methionine + H(+) = S-adenosyl 3-(methylsulfanyl)propylamine + CO2. It functions in the pathway amine and polyamine biosynthesis; S-adenosylmethioninamine biosynthesis; S-adenosylmethioninamine from S-adenosyl-L-methionine: step 1/1. Functionally, essential for biosynthesis of the polyamines spermidine and spermine. Promotes maintenance and self-renewal of embryonic stem cells, by maintaining spermine levels. This Rattus norvegicus (Rat) protein is S-adenosylmethionine decarboxylase proenzyme (Amd1).